A 204-amino-acid polypeptide reads, in one-letter code: Neurensin-2 (204 aa).

2 helical membrane-spanning segments follow: residues 66–86 (LSSG…GYAV) and 122–142 (LCVA…IGWL). The disordered stretch occupies residues 178–204 (SGQSWFSPPASPFGQSSVQTIQPKRDS). Over residues 190–204 (FGQSSVQTIQPKRDS) the composition is skewed to polar residues.

This sequence belongs to the VMP family.

The protein localises to the membrane. Functionally, may play a role in maintenance and/or transport of vesicles. This Homo sapiens (Human) protein is Neurensin-2 (NRSN2).